Reading from the N-terminus, the 827-residue chain is MELNRRDFMKANAAAAAALAAGITLPVKNVYANDNSIKWDKAPCRFCGTGCSVLVGTQNGRMVASQGDPDAEVNRGLNCIKGYFLPKIIYGKDRLTSPMLRMKDGKYDKNGEFTPVSWDQAFTIMAEKFKKAIKEQGPNGVGMFTSGQSTIFEGVAKSKLFKAGLRSNNIDPNARHCMASAAVAFMRTFGMDEPMGCYDDIEKADAFVLWGSNMAEMHPILWSRISDRRLSKQDAKVAVLSTFEHRSFELADLPIVFKPQGDLAIMNYIANYLIQNNAIDQDFIQKHTKFKRGETDIGYGLRDNHPLEQAAKNAKTAGKMHDSSFEEFKQLVSEYTLDKAHELSGVPKDQLESLAKMYADPNLNIVSFWTMGFNQHVRGVWANHLIYNIHLLTGKISKPGCGPFSLTGQPSACGTAREVGTFIHRLPADLVVTNPEHVKTAEKLWKLPNGVIQTKVGLHAVAQDRALKDGKLNAYWVMCNNNMQCGPNINQERMPGWRDERNFIVVSDPYPTVSALSADLILPTAMWVEKEGAYGNAERRTQFWFQQVKAPGEAKSDLWQLVEFSKYFTTDEMWPAEVLAANPEYKGKTLFDVLYRNGQVDKFQVPADKAGYINDEADHFGFYLQKGLFEEYAEFGRGHGHDLASFETYHKARGLRWPVVDGKETLWRYREGYDPYVQAGEGVSFYGNKDKRAVILAVPYEPPAEAPDAEYDLWLSTGRVLEHWHSGSMTRRVPELHRSFPNNLVWMHPTDAQKRGLRHGDKVKVISRRGEMISHLDTRGRNKVPEGLIYTTFFDAGQLANKLTLDATDPISKETDFKKCAVKVVKA.

Residues 1–32 (MELNRRDFMKANAAAAAALAAGITLPVKNVYA) constitute a signal peptide (tat-type signal). One can recognise a 4Fe-4S Mo/W bis-MGD-type domain in the interval 37–93 (IKWDKAPCRFCGTGCSVLVGTQNGRMVASQGDPDAEVNRGLNCIKGYFLPKIIYGKD). [4Fe-4S] cluster is bound by residues Cys-44, Cys-47, Cys-51, and Cys-79. Residues Lys-81, Gln-148, Asn-173, Cys-177, 210–217 (WGSNMAEM), 241–245 (STFEH), Met-371, Gln-375, Asn-481, 507–508 (SD), Lys-530, Asp-557, and 717–726 (TGRVLEHWHS) contribute to the Mo-bis(molybdopterin guanine dinucleotide) site. Phe-793 lines the substrate pocket. 2 residues coordinate Mo-bis(molybdopterin guanine dinucleotide): Asn-801 and Lys-818.

The protein belongs to the prokaryotic molybdopterin-containing oxidoreductase family. NasA/NapA/NarB subfamily. In terms of assembly, component of the periplasmic nitrate reductase NapAB complex composed of NapA and NapB. [4Fe-4S] cluster serves as cofactor. Mo-bis(molybdopterin guanine dinucleotide) is required as a cofactor. Predicted to be exported by the Tat system. The position of the signal peptide cleavage has not been experimentally proven.

It is found in the periplasm. It catalyses the reaction 2 Fe(II)-[cytochrome] + nitrate + 2 H(+) = 2 Fe(III)-[cytochrome] + nitrite + H2O. In terms of biological role, catalytic subunit of the periplasmic nitrate reductase complex NapAB. Receives electrons from NapB and catalyzes the reduction of nitrate to nitrite. The chain is Periplasmic nitrate reductase from Glaesserella parasuis serovar 5 (strain SH0165) (Haemophilus parasuis).